Here is a 591-residue protein sequence, read N- to C-terminus: Aspartate--tRNA(Asp/Asn) ligase (591 aa).

Glutamate 176 is an L-aspartate binding site. Residues 200–203 are aspartate; sequence QLFK. L-aspartate is bound at residue arginine 222. ATP contacts are provided by residues 222–224 and glutamine 231; that span reads RDE. An L-aspartate-binding site is contributed by histidine 450. Glutamate 484 is an ATP binding site. Arginine 491 provides a ligand contact to L-aspartate. 536-539 is a binding site for ATP; the sequence is GLDR.

Belongs to the class-II aminoacyl-tRNA synthetase family. Type 1 subfamily. In terms of assembly, homodimer.

It is found in the cytoplasm. The catalysed reaction is tRNA(Asx) + L-aspartate + ATP = L-aspartyl-tRNA(Asx) + AMP + diphosphate. Its function is as follows. Aspartyl-tRNA synthetase with relaxed tRNA specificity since it is able to aspartylate not only its cognate tRNA(Asp) but also tRNA(Asn). Reaction proceeds in two steps: L-aspartate is first activated by ATP to form Asp-AMP and then transferred to the acceptor end of tRNA(Asp/Asn). In Bacillus cereus (strain AH187), this protein is Aspartate--tRNA(Asp/Asn) ligase.